We begin with the raw amino-acid sequence, 123 residues long: Dihydroneopterin triphosphate 2'-epimerase (123 aa).

It belongs to the DHNA family. As to quaternary structure, homooctamer. Dimer of tetramers.

It carries out the reaction 7,8-dihydroneopterin 3'-triphosphate = 7,8-dihydromonapterin 3'-triphosphate. In terms of biological role, catalyzes the epimerization of carbon 2' of the side chain of 7,8-dihydroneopterin triphosphate (H2NTP) to form 7,8-dihydromonapterin triphosphate (H2MTP). Is required for tetrahydromonapterin biosynthesis. In Pseudomonas aeruginosa (strain ATCC 15692 / DSM 22644 / CIP 104116 / JCM 14847 / LMG 12228 / 1C / PRS 101 / PAO1), this protein is Dihydroneopterin triphosphate 2'-epimerase.